The chain runs to 159 residues: Ribosomal RNA large subunit methyltransferase H (159 aa).

S-adenosyl-L-methionine-binding positions include Leu-76, Gly-108, and Phe-127–Phe-132.

It belongs to the RNA methyltransferase RlmH family. As to quaternary structure, homodimer.

The protein localises to the cytoplasm. The catalysed reaction is pseudouridine(1915) in 23S rRNA + S-adenosyl-L-methionine = N(3)-methylpseudouridine(1915) in 23S rRNA + S-adenosyl-L-homocysteine + H(+). Specifically methylates the pseudouridine at position 1915 (m3Psi1915) in 23S rRNA. The sequence is that of Ribosomal RNA large subunit methyltransferase H from Bacillus subtilis (strain 168).